Reading from the N-terminus, the 486-residue chain is Iron-sulfur cluster assembly SufBD family protein ycf24 (486 aa).

It belongs to the iron-sulfur cluster assembly SufBD family.

It localises to the plastid. The protein resides in the chloroplast. In Trieres chinensis (Marine centric diatom), this protein is Iron-sulfur cluster assembly SufBD family protein ycf24 (ycf24).